Consider the following 410-residue polypeptide: Translation initiation factor 2 subunit gamma (410 aa).

The tr-type G domain occupies 6–203 (QSEINIGMVG…AIEDLMPTPE (198 aa)). The segment at 15-22 (GHVDHGKT) is G1. Mg(2+) is bound by residues aspartate 18, threonine 22, glycine 43, and serine 45. 18 to 23 (DHGKTS) provides a ligand contact to GTP. The interval 43–47 (GISIR) is G2. The Zn(2+) site is built by cysteine 58, cysteine 61, cysteine 73, and cysteine 76. The segment at 90 to 93 (DAPG) is G3. GTP contacts are provided by residues 146–149 (NKID) and 181–183 (SAH). The tract at residues 146 to 149 (NKID) is G4. The segment at 181 to 183 (SAH) is G5.

The protein belongs to the TRAFAC class translation factor GTPase superfamily. Classic translation factor GTPase family. EIF2G subfamily. In terms of assembly, heterotrimer composed of an alpha, a beta and a gamma chain. Mg(2+) serves as cofactor.

The enzyme catalyses GTP + H2O = GDP + phosphate + H(+). Functionally, eIF-2 functions in the early steps of protein synthesis by forming a ternary complex with GTP and initiator tRNA. This Methanococcus aeolicus (strain ATCC BAA-1280 / DSM 17508 / OCM 812 / Nankai-3) protein is Translation initiation factor 2 subunit gamma.